Here is a 1145-residue protein sequence, read N- to C-terminus: Protein STU1 (1145 aa).

2 HEAT repeats span residues 96-134 and 168-206; these read TLPL…EKYV and YVPV…KSDL. 3 disordered regions span residues 226 to 271, 510 to 793, and 816 to 839; these read ELIP…GIDT, LLNK…VVDP, and PEPV…PAAS. Residues 229–239 are compositionally biased toward low complexity; sequence PTSSRPETPAA. Over residues 535–545 the composition is skewed to polar residues; that stretch reads SKSTMGTSKPS. 3 stretches are compositionally biased toward low complexity: residues 580-594, 663-676, and 696-708; these read TTTT…SGAR, ASHA…SPSS, and QSQS…SSPS.

This sequence belongs to the CLASP family. In terms of assembly, interacts with microtubules.

It is found in the cytoplasm. It localises to the cytoskeleton. The protein localises to the nucleus. Its subcellular location is the spindle. In terms of biological role, microtubule binding protein that promotes the stabilization of dynamic microtubules. Required for mitotic spindle formation. The polypeptide is Protein STU1 (STU1) (Gibberella zeae (strain ATCC MYA-4620 / CBS 123657 / FGSC 9075 / NRRL 31084 / PH-1) (Wheat head blight fungus)).